The primary structure comprises 329 residues: Malate dehydrogenase (329 aa).

12-18 lines the NAD(+) pocket; that stretch reads GAAGQIG. Residues Arg-95 and Arg-101 each contribute to the substrate site. Residues Asn-108, Gln-115, and 132-134 each bind NAD(+); that span reads VGN. Residues Asn-134 and Arg-165 each coordinate substrate. The active-site Proton acceptor is the His-190.

It belongs to the LDH/MDH superfamily. MDH type 2 family.

It carries out the reaction (S)-malate + NAD(+) = oxaloacetate + NADH + H(+). Its function is as follows. Catalyzes the reversible oxidation of malate to oxaloacetate. This Polynucleobacter asymbioticus (strain DSM 18221 / CIP 109841 / QLW-P1DMWA-1) (Polynucleobacter necessarius subsp. asymbioticus) protein is Malate dehydrogenase.